The chain runs to 156 residues: Transcription elongation factor GreA (156 aa).

Residues 1 to 32 (MKKVRLTREGYEKLKKELEDLKRKFMYEISER) are a coiled coil.

It belongs to the GreA/GreB family.

Functionally, necessary for efficient RNA polymerase transcription elongation past template-encoded arresting sites. The arresting sites in DNA have the property of trapping a certain fraction of elongating RNA polymerases that pass through, resulting in locked ternary complexes. Cleavage of the nascent transcript by cleavage factors such as GreA or GreB allows the resumption of elongation from the new 3'terminus. GreA releases sequences of 2 to 3 nucleotides. The protein is Transcription elongation factor GreA of Thermotoga petrophila (strain ATCC BAA-488 / DSM 13995 / JCM 10881 / RKU-1).